A 479-amino-acid polypeptide reads, in one-letter code: Adenosylhomocysteinase (479 aa).

The substrate site is built by Thr-66, Asp-142, and Glu-203. An NAD(+)-binding site is contributed by 204–206 (TTT). Positions 233 and 237 each coordinate substrate. NAD(+) is bound by residues Asn-238, 267-272 (GYGDVG), Glu-290, Asn-325, 346-348 (IGH), and Asn-394.

It belongs to the adenosylhomocysteinase family. NAD(+) is required as a cofactor.

It is found in the cytoplasm. It carries out the reaction S-adenosyl-L-homocysteine + H2O = L-homocysteine + adenosine. The protein operates within amino-acid biosynthesis; L-homocysteine biosynthesis; L-homocysteine from S-adenosyl-L-homocysteine: step 1/1. In terms of biological role, may play a key role in the regulation of the intracellular concentration of adenosylhomocysteine. The chain is Adenosylhomocysteinase from Nitratidesulfovibrio vulgaris (strain ATCC 29579 / DSM 644 / CCUG 34227 / NCIMB 8303 / VKM B-1760 / Hildenborough) (Desulfovibrio vulgaris).